A 215-amino-acid polypeptide reads, in one-letter code: Putative glycosyltransferase ALG1L2 (215 aa).

Positions 40–66 (PFRARSEPEDPDTERSAFTERDSGSGL) are disordered. Positions 43–62 (ARSEPEDPDTERSAFTERDS) are enriched in basic and acidic residues.

Belongs to the glycosyltransferase group 1 family.

Its function is as follows. Putative glycosyltransferase. This chain is Putative glycosyltransferase ALG1L2 (ALG1L2), found in Homo sapiens (Human).